Here is a 300-residue protein sequence, read N- to C-terminus: Inosose dehydratase (300 aa).

This sequence belongs to the IolE/MocC family. Glutathione is required as a cofactor. Co(2+) serves as cofactor. It depends on Mn(2+) as a cofactor.

The catalysed reaction is scyllo-inosose = 3D-3,5/4-trihydroxycyclohexane-1,2-dione + H2O. In terms of biological role, catalyzes the dehydration of inosose (2-keto-myo-inositol, 2KMI or 2,4,6/3,5-pentahydroxycyclohexanone) to 3D-(3,5/4)-trihydroxycyclohexane-1,2-dione (D-2,3-diketo-4-deoxy-epi-inositol). The chain is Inosose dehydratase from Mesomycoplasma hyopneumoniae (strain 232) (Mycoplasma hyopneumoniae).